A 442-amino-acid chain; its full sequence is NADH-quinone oxidoreductase subunit D (442 aa).

It belongs to the complex I 49 kDa subunit family. NDH-1 is composed of 14 different subunits. Subunits NuoB, C, D, E, F, and G constitute the peripheral sector of the complex.

It localises to the cell membrane. The enzyme catalyses a quinone + NADH + 5 H(+)(in) = a quinol + NAD(+) + 4 H(+)(out). Functionally, NDH-1 shuttles electrons from NADH, via FMN and iron-sulfur (Fe-S) centers, to quinones in the respiratory chain. The immediate electron acceptor for the enzyme in this species is believed to be a menaquinone. Couples the redox reaction to proton translocation (for every two electrons transferred, four hydrogen ions are translocated across the cytoplasmic membrane), and thus conserves the redox energy in a proton gradient. In Mycolicibacterium vanbaalenii (strain DSM 7251 / JCM 13017 / BCRC 16820 / KCTC 9966 / NRRL B-24157 / PYR-1) (Mycobacterium vanbaalenii), this protein is NADH-quinone oxidoreductase subunit D.